Reading from the N-terminus, the 1019-residue chain is Serine/threonine-protein kinase 31 (1019 aa).

The Tudor domain maps to 78-137; it reads NLDPNKIYGGLFSEDQCWYRCKVLKIISVEKCLVRYIDYGNTEILNRSDIVEIPLELQFS. A coiled-coil region spans residues 298–355; sequence EKIKQDQKLIEENEKLKTEKDALLESYKALELKVEQIAQELQQEKAAAVDLTNHLEYT. Residues 710 to 1019 enclose the Protein kinase domain; it reads IGLLKYMNSG…TRNGEANFDC (310 aa). Residues 716–724 and K737 contribute to the ATP site; that span reads MNSGGLLTM.

The protein belongs to the protein kinase superfamily. Ser/Thr protein kinase family. In terms of tissue distribution, testis specific.

It catalyses the reaction L-seryl-[protein] + ATP = O-phospho-L-seryl-[protein] + ADP + H(+). The enzyme catalyses L-threonyl-[protein] + ATP = O-phospho-L-threonyl-[protein] + ADP + H(+). The sequence is that of Serine/threonine-protein kinase 31 (STK31) from Homo sapiens (Human).